We begin with the raw amino-acid sequence, 260 residues long: Snake venom serine protease homolog (260 aa).

Positions 1-18 (MVLVRVLANLLMLQLSYA) are cleaved as a signal peptide. Residues 19–24 (QKSSEL) constitute a propeptide that is removed on maturation. The Peptidase S1 domain maps to 25–251 (IIGGDECNIN…HLDWIKSIIA (227 aa)). 6 cysteine pairs are disulfide-bonded: Cys31–Cys165, Cys52–Cys68, Cys100–Cys258, Cys144–Cys212, Cys176–Cys191, and Cys202–Cys227. Residue Asp112 is the Charge relay system of the active site. Asn123 and Asn124 each carry an N-linked (GlcNAc...) asparagine glycan. Catalysis depends on Ser206, which acts as the Charge relay system.

This sequence belongs to the peptidase S1 family. Snake venom subfamily. Expressed by the venom gland.

The protein localises to the secreted. In terms of biological role, snake venom serine protease homolog. May act in the hemostasis system of the prey. This chain is Snake venom serine protease homolog, found in Protobothrops jerdonii (Jerdon's pitviper).